A 73-amino-acid chain; its full sequence is Alpha-amylase inhibitor Paim-1 (73 aa).

2 disulfide bridges follow: Cys8/Cys24 and Cys42/Cys70.

Functionally, inhibits mammalian alpha-amylases specifically but has no action on plant and microbial alpha-amylases. This is Alpha-amylase inhibitor Paim-1 from Streptomyces olivaceoviridis (Streptomyces corchorusii).